The following is a 449-amino-acid chain: Exodeoxyribonuclease 7 large subunit (449 aa).

Belongs to the XseA family. In terms of assembly, heterooligomer composed of large and small subunits.

It localises to the cytoplasm. The enzyme catalyses Exonucleolytic cleavage in either 5'- to 3'- or 3'- to 5'-direction to yield nucleoside 5'-phosphates.. In terms of biological role, bidirectionally degrades single-stranded DNA into large acid-insoluble oligonucleotides, which are then degraded further into small acid-soluble oligonucleotides. This is Exodeoxyribonuclease 7 large subunit from Salmonella newport (strain SL254).